The chain runs to 444 residues: MFHGAKGPLLIERIGHLLSINYGEKEERKRWAMQGISYLQEVQCTSTPYLEILVEESGLRPVSLLNSQLVGKPHFSLLGGFDENIARDIISHNFQNAIFQMESEEVPLTKRYQHLEKITQISLLCKNFKGIEEIEYNVKNIIQGRKNFDMLNSMEKDRISHEVVQDDSFSLLRIQMLLCVSYFLQERYFDCCTKFFTMMTSEPLTLKVLSEHLDCMNFISKEEFIMMVNISVLISIPLDNYDDFIYLSDLKQFFQMTPLLVNCLELLINTNFNKFFKIWHGEINKICMESLFLEPSWSSSAAVIMRCKIYFFYLRISKKLQFSYLSSTLGIDLEDIKEELTKLIISGQLNFEIDGDVIHFEDSSILQSIVNEISRNGTMINEVIDKLKNENTDLKDIIQGNPLMYSGGNNTATIINNESSDDMDIDEVNDRSDISDSEGGLFEC.

Residues 195 to 367 (FFTMMTSEPL…IHFEDSSILQ (173 aa)) form the PCI domain. Residues 419–439 (SSDDMDIDEVNDRSDISDSEG) are disordered.

In terms of assembly, component of a COP9 signalosome-like (CSN) complex, composed of RRI1/CSN5, CSN9, RRI2/CSN10, PCI8/CSN11, CSN12 and CSI1. Interacts with PRT1 and RPG1, 2 subunits of the core complex of translation initiation factor 3 (eIF3).

The protein resides in the cytoplasm. The protein localises to the nucleus. In terms of biological role, component of the COP9 signalosome (CSN) complex that acts as an regulator of the ubiquitin (Ubl) conjugation pathway by mediating the deneddylation of the cullin subunit of SCF-type E3 ubiquitin-protein ligase complexes The CSN complex is involved in the regulation of the mating pheromone response. PCI8 may also be involved in transcriptional and translational control. The protein is Cop9 signalosome complex subunit 11 (PCI8) of Saccharomyces cerevisiae (strain ATCC 204508 / S288c) (Baker's yeast).